Reading from the N-terminus, the 232-residue chain is Transcriptional regulatory protein CpxR (232 aa).

A Response regulatory domain is found at 3-115; that stretch reads KILLVDDDRE…ELVARIRAIL (113 aa). Asp51 bears the 4-aspartylphosphate mark. The ompR/PhoB-type DNA-binding region spans 131-230; sequence SPTLEVDALV…LRGRGYLMVS (100 aa).

Phosphorylated by CpxA.

It is found in the cytoplasm. Its function is as follows. Member of the two-component regulatory system CpxA/CpxR. This system combats a variety of extracytoplasmic protein-mediated toxicities. It performs this function by increasing the synthesis of the periplasmic protease, DegP as well as that of CpxP protein. The sequence is that of Transcriptional regulatory protein CpxR (cpxR) from Escherichia coli O157:H7.